Here is a 566-residue protein sequence, read N- to C-terminus: Oxygen-dependent choline dehydrogenase (566 aa).

7–36 (DYIICGAGSAGNVLATRLTEDPNVTVLLLE) lines the FAD pocket. A disordered region spans residues 183 to 203 (QQEGFGPMDRTVTPKGRRAST). Histidine 474 (proton acceptor) is an active-site residue.

The protein belongs to the GMC oxidoreductase family. Requires FAD as cofactor.

The catalysed reaction is choline + A = betaine aldehyde + AH2. It catalyses the reaction betaine aldehyde + NAD(+) + H2O = glycine betaine + NADH + 2 H(+). It functions in the pathway amine and polyamine biosynthesis; betaine biosynthesis via choline pathway; betaine aldehyde from choline (cytochrome c reductase route): step 1/1. Its function is as follows. Involved in the biosynthesis of the osmoprotectant glycine betaine. Catalyzes the oxidation of choline to betaine aldehyde and betaine aldehyde to glycine betaine at the same rate. In Burkholderia ambifaria (strain ATCC BAA-244 / DSM 16087 / CCUG 44356 / LMG 19182 / AMMD) (Burkholderia cepacia (strain AMMD)), this protein is Oxygen-dependent choline dehydrogenase.